A 150-amino-acid chain; its full sequence is Large ribosomal subunit protein bL9 (150 aa).

It belongs to the bacterial ribosomal protein bL9 family.

Its function is as follows. Binds to the 23S rRNA. The chain is Large ribosomal subunit protein bL9 from Limosilactobacillus reuteri (strain DSM 20016) (Lactobacillus reuteri).